Reading from the N-terminus, the 63-residue chain is uncharacterized protein (63 aa).

The chain crosses the membrane as a helical span at residues 20-40 (IVLLISFIFFFGRFIYSSVGA).

The protein localises to the membrane. This is an uncharacterized protein from Escherichia coli O157:H7.